We begin with the raw amino-acid sequence, 420 residues long: Serine hydroxymethyltransferase (420 aa).

Residues L121 and G125–L127 each bind (6S)-5,6,7,8-tetrahydrofolate. K230 bears the N6-(pyridoxal phosphate)lysine mark. S355–F357 contacts (6S)-5,6,7,8-tetrahydrofolate.

It belongs to the SHMT family. Homodimer. Pyridoxal 5'-phosphate serves as cofactor.

It localises to the cytoplasm. It carries out the reaction (6R)-5,10-methylene-5,6,7,8-tetrahydrofolate + glycine + H2O = (6S)-5,6,7,8-tetrahydrofolate + L-serine. It functions in the pathway one-carbon metabolism; tetrahydrofolate interconversion. Its pathway is amino-acid biosynthesis; glycine biosynthesis; glycine from L-serine: step 1/1. Functionally, catalyzes the reversible interconversion of serine and glycine with tetrahydrofolate (THF) serving as the one-carbon carrier. This reaction serves as the major source of one-carbon groups required for the biosynthesis of purines, thymidylate, methionine, and other important biomolecules. Also exhibits THF-independent aldolase activity toward beta-hydroxyamino acids, producing glycine and aldehydes, via a retro-aldol mechanism. The polypeptide is Serine hydroxymethyltransferase (Streptococcus gordonii (strain Challis / ATCC 35105 / BCRC 15272 / CH1 / DL1 / V288)).